The following is a 235-amino-acid chain: Phosphate-specific transport system accessory protein PhoU homolog 2 (235 aa).

It belongs to the PhoU family. As to quaternary structure, homodimer.

The protein localises to the cytoplasm. Its function is as follows. Plays a role in the regulation of phosphate uptake. This is Phosphate-specific transport system accessory protein PhoU homolog 2 (phoU2) from Thermotoga maritima (strain ATCC 43589 / DSM 3109 / JCM 10099 / NBRC 100826 / MSB8).